Here is a 199-residue protein sequence, read N- to C-terminus: LIM domain-containing protein E (199 aa).

The LIM zinc-binding domain maps to 5–65 (VKCGACAKTA…PVHTPKVSAT (61 aa)). A disordered region spans residues 134 to 199 (YAVFGADGQP…EEEQQYEEEQ (66 aa)). Low complexity-rich tracts occupy residues 146–155 (EQQEQQQYTE) and 163–174 (EEQQYQEEQQQY). The segment covering 175–199 (QEEEQQYQEEEQQYQEEEQQYEEEQ) has biased composition (acidic residues).

As to quaternary structure, may interact with rac1A.

The protein localises to the cytoplasm. The protein resides in the cell cortex. Its subcellular location is the nucleus. It localises to the cell projection. It is found in the lamellipodium. The protein localises to the filopodium. The protein resides in the cytoskeleton. In terms of biological role, associates with the actin cytoskeleton and may regulate actin polymerization in lamellipodia, through a rac1-dependent signaling pathway. May play a role in cell motility. Involved in cytokinesis by regulating the microtubule system and linking it to the cortical actin network. This is LIM domain-containing protein E (limE) from Dictyostelium discoideum (Social amoeba).